Here is a 66-residue protein sequence, read N- to C-terminus: Phylloseptin-S2 (66 aa).

Positions 1–22 are cleaved as a signal peptide; the sequence is MAFLKKSLFLVLFLGLVSLSIC. Positions 23–46 are excised as a propeptide; the sequence is EEEKRETEEEEHDQEEDDKSEEKR. A disordered region spans residues 25–44; it reads EKRETEEEEHDQEEDDKSEE. Residues 30–41 show a composition bias toward acidic residues; sequence EEEEHDQEEDDK. Phenylalanine 65 is subject to Phenylalanine amide.

Expressed by the skin glands.

It localises to the secreted. The protein resides in the target cell membrane. Its function is as follows. Antimicrobial peptide with high activity against Gram-positive bacteria, moderate activity against Gram-negative bacteria, and moderate activity against fungi. Acts by causing bacterial membrane disruption inducing leakage of the intracellular content followed by cell death. It adopts an alpha-helical amphipathic structure in membrane environments. Also shows highly potent antiparasitic activity against Leishmania species. Shows moderate hemolytic activity on human erythrocytes (LC(50)=25 uM). Is also active on human monocytes (IC(50)=22.5 uM). The protein is Phylloseptin-S2 of Phyllomedusa sauvagei (Sauvage's leaf frog).